We begin with the raw amino-acid sequence, 545 residues long: CTP synthase (545 aa).

Residues 1–266 are amidoligase domain; that stretch reads MTTNYIFVTG…DDYICKRFSL (266 aa). CTP is bound at residue Ser14. Ser14 lines the UTP pocket. ATP-binding positions include 15–20 and Asp72; that span reads SLGKGI. Asp72 and Glu140 together coordinate Mg(2+). CTP contacts are provided by residues 147-149, 187-192, and Lys223; these read DIE and KTKPTQ. Residues 187-192 and Lys223 each bind UTP; that span reads KTKPTQ. 239–241 is an ATP binding site; it reads KDV. A Glutamine amidotransferase type-1 domain is found at 291–542; sequence TIGMVGKYIE…VKAASEHQKR (252 aa). Gly352 is an L-glutamine binding site. Cys379 functions as the Nucleophile; for glutamine hydrolysis in the catalytic mechanism. L-glutamine is bound by residues 380–383, Glu403, and Arg470; that span reads LGMQ. Catalysis depends on residues His515 and Glu517.

This sequence belongs to the CTP synthase family. Homotetramer.

It catalyses the reaction UTP + L-glutamine + ATP + H2O = CTP + L-glutamate + ADP + phosphate + 2 H(+). The catalysed reaction is L-glutamine + H2O = L-glutamate + NH4(+). The enzyme catalyses UTP + NH4(+) + ATP = CTP + ADP + phosphate + 2 H(+). The protein operates within pyrimidine metabolism; CTP biosynthesis via de novo pathway; CTP from UDP: step 2/2. Allosterically activated by GTP, when glutamine is the substrate; GTP has no effect on the reaction when ammonia is the substrate. The allosteric effector GTP functions by stabilizing the protein conformation that binds the tetrahedral intermediate(s) formed during glutamine hydrolysis. Inhibited by the product CTP, via allosteric rather than competitive inhibition. In terms of biological role, catalyzes the ATP-dependent amination of UTP to CTP with either L-glutamine or ammonia as the source of nitrogen. Regulates intracellular CTP levels through interactions with the four ribonucleotide triphosphates. This chain is CTP synthase, found in Salmonella arizonae (strain ATCC BAA-731 / CDC346-86 / RSK2980).